The following is a 1237-amino-acid chain: U3 small nucleolar RNA-associated protein 22 (1237 aa).

The segment at 1-78 is disordered; that stretch reads MATSVKRKAS…TNTAATRHNG (78 aa). Serine 10 and serine 58 each carry phosphoserine. A Phosphothreonine modification is found at threonine 60. Polar residues predominate over residues 61 to 78; the sequence is SPESNEVATNTAATRHNG. At serine 64 the chain carries Phosphoserine.

This sequence belongs to the NRAP family. In terms of assembly, interacts with snoRNA U3. Interacts with MPP10. Component of the ribosomal small subunit (SSU) processome composed of at least 40 protein subunits and snoRNA U3. Interacts with UBP10.

The protein resides in the nucleus. It localises to the nucleolus. In terms of biological role, involved in nucleolar processing of pre-18S ribosomal RNA and ribosome assembly. This Saccharomyces cerevisiae (strain ATCC 204508 / S288c) (Baker's yeast) protein is U3 small nucleolar RNA-associated protein 22 (UTP22).